Here is a 241-residue protein sequence, read N- to C-terminus: Terpene cyclase olcD (241 aa).

Transmembrane regions (helical) follow at residues 19 to 39 (LSDI…FATI), 49 to 71 (WMPL…LYPP), 76 to 95 (ILGF…LRFA), 108 to 128 (YLPV…LALI), 137 to 157 (FYYG…SGLV), 166 to 186 (SYTI…GLFF), and 202 to 222 (LMRW…VQFW).

This sequence belongs to the paxB family.

The protein localises to the membrane. The protein operates within secondary metabolite biosynthesis; terpenoid biosynthesis. Terpene cyclase; part of the gene cluster that mediates the biosynthesis of 15-deoxyoxalicine B. The first step of the pathway is the synthesis of nicotinyl-CoA from nicotinic acid by the nicotinic acid-CoA ligase olcI. Nicotinyl-CoA is then a substrate of polyketide synthase olcA to produce 4-hydroxy-6-(3-pyridinyl)-2H-pyran-2-one (HPPO) which is further prenylated by the polyprenyl transferase olcH to yield geranylgeranyl-HPPO. Geranylgeranyl pyrophosphate is provided by the cluster-specific geranylgeranyl pyrophosphate synthase olcC. The FAD-dependent monooxygenase olcE catalyzes the epoxidation of geranylgeranyl-HPPO and the terpene cyclase olcD catalyzes the cyclization of the terpenoid component, resulting in the formation of the tricyclic terpene moiety seen in predecaturin E. The cytochrome P450 monooxygenase then catalyzes the allylic oxidation of predecaturin E, which is followed by spirocylization with concomitant loss of one molecule of water to form decaturin E. Decaturin E is the substrate of the cytochrome P450 monooxygenase olcJ which hydroxylates it at the C-29 position to form decaturin F. The short-chain dehydrogenase/reductase olcF may catalyze the oxidation of decaturin F to generate the 29-hydroxyl-27-one intermediate, and subsequent hemiacetal formation probably leads to the formation of decaturin C. The dioxygenase olcK may be a peroxisomal enzyme that catalyzes the hydroxylation of decaturin C into decaturin A once decaturin C is shuttled into the peroxisome by the MFS transporter olcL. Finally the cytochrome P450 monooxygenase olcB catalyzes the oxidative rearrangement to yield 15-deoxyoxalicine B. In the absence of olcJ, decaturin E may be shunted to a pathway in which it is oxidized to a ketone, possibly by olcF, to form decaturin D, which undergoes further allylic oxidation to yield decaturin G. Moreover, in the absence of oclK or oclL, oclB can convert decaturin C into 15-deoxyoxalicine A. The polypeptide is Terpene cyclase olcD (Penicillium canescens).